Consider the following 145-residue polypeptide: Transcription antitermination protein NusB (145 aa).

Belongs to the NusB family.

Involved in transcription antitermination. Required for transcription of ribosomal RNA (rRNA) genes. Binds specifically to the boxA antiterminator sequence of the ribosomal RNA (rrn) operons. The sequence is that of Transcription antitermination protein NusB from Burkholderia vietnamiensis (strain G4 / LMG 22486) (Burkholderia cepacia (strain R1808)).